The primary structure comprises 152 residues: Large-conductance mechanosensitive channel (152 aa).

A run of 2 helical transmembrane segments spans residues 14 to 34 (VIDLAIGVVIGGAFGKIVTSL) and 81 to 101 (GLFLNNLINFLIIAFSIFIVI).

This sequence belongs to the MscL family. In terms of assembly, homopentamer.

Its subcellular location is the cell membrane. Functionally, channel that opens in response to stretch forces in the membrane lipid bilayer. May participate in the regulation of osmotic pressure changes within the cell. In Clostridium perfringens (strain ATCC 13124 / DSM 756 / JCM 1290 / NCIMB 6125 / NCTC 8237 / Type A), this protein is Large-conductance mechanosensitive channel.